The following is a 154-amino-acid chain: Large ribosomal subunit protein uL13 (154 aa).

Belongs to the universal ribosomal protein uL13 family. In terms of assembly, part of the 50S ribosomal subunit.

Functionally, this protein is one of the early assembly proteins of the 50S ribosomal subunit, although it is not seen to bind rRNA by itself. It is important during the early stages of 50S assembly. This Rhodospirillum centenum (strain ATCC 51521 / SW) protein is Large ribosomal subunit protein uL13.